Reading from the N-terminus, the 201-residue chain is Large ribosomal subunit protein uL4 (201 aa).

The disordered stretch occupies residues 39–72; the sequence is RRGTASTKTRAQVSKSGKKMYSQKGTGNARHGDR. Polar residues predominate over residues 42-53; sequence TASTKTRAQVSK.

This sequence belongs to the universal ribosomal protein uL4 family. Part of the 50S ribosomal subunit.

In terms of biological role, one of the primary rRNA binding proteins, this protein initially binds near the 5'-end of the 23S rRNA. It is important during the early stages of 50S assembly. It makes multiple contacts with different domains of the 23S rRNA in the assembled 50S subunit and ribosome. Functionally, forms part of the polypeptide exit tunnel. The chain is Large ribosomal subunit protein uL4 from Deinococcus deserti (strain DSM 17065 / CIP 109153 / LMG 22923 / VCD115).